The sequence spans 517 residues: 2-isopropylmalate synthase (517 aa).

One can recognise a Pyruvate carboxyltransferase domain in the interval valine 7 to valine 269. Mn(2+) contacts are provided by aspartate 16, histidine 204, histidine 206, and asparagine 240. A regulatory domain region spans residues lysine 395–isoleucine 517.

The protein belongs to the alpha-IPM synthase/homocitrate synthase family. LeuA type 1 subfamily. Homodimer. Mn(2+) is required as a cofactor.

Its subcellular location is the cytoplasm. It catalyses the reaction 3-methyl-2-oxobutanoate + acetyl-CoA + H2O = (2S)-2-isopropylmalate + CoA + H(+). The protein operates within amino-acid biosynthesis; L-leucine biosynthesis; L-leucine from 3-methyl-2-oxobutanoate: step 1/4. Its function is as follows. Catalyzes the condensation of the acetyl group of acetyl-CoA with 3-methyl-2-oxobutanoate (2-ketoisovalerate) to form 3-carboxy-3-hydroxy-4-methylpentanoate (2-isopropylmalate). In Neisseria meningitidis serogroup A / serotype 4A (strain DSM 15465 / Z2491), this protein is 2-isopropylmalate synthase.